The primary structure comprises 228 residues: Cutinase CUT1 (228 aa).

A signal peptide spans 1-16; sequence MQFITVALTLIALASA. A disulfide bond links C49 and C127. The Nucleophile role is filled by S138. C189 and C196 are oxidised to a cystine. Residue N190 is glycosylated (N-linked (GlcNAc...) asparagine). D193 is a catalytic residue. The active-site Proton donor/acceptor is the H206.

It belongs to the cutinase family. In terms of processing, the 2 disulfide bonds play a critical role in holding the catalytic residues in juxta-position; reduction of the disulfide bridges results in the complete inactivation of the enzyme.

Its subcellular location is the secreted. It catalyses the reaction cutin + H2O = cutin monomers.. In terms of biological role, catalyzes the hydrolysis of complex carboxylic polyesters found in the cell wall of plants. Degrades cutin, a macromolecule that forms the structure of the plant cuticle. Required for efficient penetration of the host plant cuticle by the appressorium during the initial stage of fungal infection. This chain is Cutinase CUT1, found in Pyricularia oryzae (strain 70-15 / ATCC MYA-4617 / FGSC 8958) (Rice blast fungus).